The chain runs to 694 residues: Elongation factor G (694 aa).

The tr-type G domain occupies 9–288 (DAIRNIGIMA…VIVKWLPSPL (280 aa)). GTP is bound by residues 18–25 (AHIDAGKT), 82–86 (DTPGH), and 136–139 (NKMD).

The protein belongs to the TRAFAC class translation factor GTPase superfamily. Classic translation factor GTPase family. EF-G/EF-2 subfamily.

The protein localises to the cytoplasm. Catalyzes the GTP-dependent ribosomal translocation step during translation elongation. During this step, the ribosome changes from the pre-translocational (PRE) to the post-translocational (POST) state as the newly formed A-site-bound peptidyl-tRNA and P-site-bound deacylated tRNA move to the P and E sites, respectively. Catalyzes the coordinated movement of the two tRNA molecules, the mRNA and conformational changes in the ribosome. The polypeptide is Elongation factor G (Chlamydia trachomatis serovar A (strain ATCC VR-571B / DSM 19440 / HAR-13)).